The primary structure comprises 131 residues: uncharacterized protein (131 aa).

The CCHC-type; degenerate zinc-finger motif lies at 64–81 (VNCDKCGKPGNVKNDCPG).

This is an uncharacterized protein from Homo sapiens (Human).